A 309-amino-acid polypeptide reads, in one-letter code: Cytochrome c biogenesis protein CcsA (309 aa).

A run of 8 helical transmembrane segments spans residues 18–38 (LGLLVFYFLLINLPISLGAVF), 48–68 (LITILVNLLITLQLLFRWSIS), 73–93 (ISNLYESLYFLTWGITLGQLL), 102–122 (IIPSIAIPIELLTVAFACFVL), 148–168 (VMLSYAALIIGSLLSMSVLFI), 216–236 (SILVGFVLLTLGLISGAVWAN), 250–267 (TWAFISWLFYAAYLHMRI), and 279–299 (LASTGFLVVLVCYLGVNFLGI).

It belongs to the CcmF/CycK/Ccl1/NrfE/CcsA family. In terms of assembly, may interact with ccs1.

The protein resides in the cellular thylakoid membrane. Its function is as follows. Required during biogenesis of c-type cytochromes (cytochrome c6 and cytochrome f) at the step of heme attachment. The sequence is that of Cytochrome c biogenesis protein CcsA from Prochlorococcus marinus (strain AS9601).